Here is a 243-residue protein sequence, read N- to C-terminus: METSLSELLDASAHIGHSTSKWNPKFFPFIHMTKKGIHIIDLIKTIQQISVACMFLKKEVRNGKRVLFVGTKNQASKVVEREAKKCQEFYINQRWPGGLLTNWPTIKLSLKKLQLLEEKEKLDHLGSTSKKEEASMKREIQKLNKYLNGIKGMKKPPDIIILVDPSREKTTISECQKLNIPTIGILDTNCNPKSVNVPIPANDDSIKAIDLIVSKLSTSIFKAKLENNQFIENSTENLNEHVK.

This sequence belongs to the universal ribosomal protein uS2 family.

It localises to the plastid. It is found in the chloroplast. The sequence is that of Small ribosomal subunit protein uS2c (rps2) from Cyanidium caldarium (Red alga).